Consider the following 275-residue polypeptide: Peflin (275 aa).

Tandem repeats lie at residues 21–29, 31–39, 41–49, 50–59, 60–68, 76–84, 85–91, and 92–100. 2 disordered regions span residues 21 to 45 and 59 to 103; these read PPGGYYPGPPHGGGQYGSGLPPGGG and SAGG…GGVP. The tract at residues 21–100 is 8 X 9 AA approximate tandem repeat of [AP]-P-G-G-P-Y-G-G-P-P; the sequence is PPGGYYPGPP…GTQPGHYGQG (80 aa). Gly residues predominate over residues 31–45; sequence HGGGQYGSGLPPGGG. Low complexity predominate over residues 59 to 70; it reads SAGGVPSGTPSG. EF-hand domains follow at residues 105–140, 146–174, 172–207, 208–244, and 245–274; these read NVDPEAYSWFQSVDADHSGYISLKELKQALVNSNWS, TCLMMINMFDKTKSGRIDVAGFSALWKFL, KFLQQWRNLFQQYDRDRSGSISSTELQQALSQMGYN, LSPQFTQLLVSRYCARSAIPAMQLDCFIKVCTQLQVL, and TEAFREKDTAVQGNIRLSFEDFVTMTASRM. Residues Asp-118, Asp-120, Ser-122, Tyr-124, and Glu-129 each coordinate Ca(2+). Asp-185, Asp-187, Ser-189, Ser-191, and Glu-196 together coordinate Ca(2+). Residues 195-275 are required for interaction with PDCD6; it reads TELQQALSQM…FVTMTASRML (81 aa).

As to quaternary structure, heterodimer; heterodimerizes (via the EF-hand 5) with PDCD6. Dissociates from PDCD6 in presence of calcium. In terms of processing, ubiquitinated by the BCR(KLHL12) E3 ubiquitin ligase complex.

The protein localises to the cytoplasm. It is found in the endoplasmic reticulum. Its subcellular location is the membrane. The protein resides in the cytoplasmic vesicle. It localises to the COPII-coated vesicle membrane. Functionally, calcium-binding protein that acts as an adapter that bridges unrelated proteins or stabilizes weak protein-protein complexes in response to calcium. Together with PDCD6, acts as a calcium-dependent adapter for the BCR(KLHL12) complex, a complex involved in endoplasmic reticulum (ER)-Golgi transport by regulating the size of COPII coats. In response to cytosolic calcium increase, the heterodimer formed with PDCD6 interacts with, and bridges together the BCR(KLHL12) complex and SEC31 (SEC31A or SEC31B), promoting monoubiquitination of SEC31 and subsequent collagen export, which is required for neural crest specification. Its role in the heterodimer formed with PDCD6 is however unclear: some evidence shows that PEF1 and PDCD6 work together and promote association between PDCD6 and SEC31 in presence of calcium. Other reports show that PEF1 dissociates from PDCD6 in presence of calcium, and may act as a negative regulator of PDCD6. Also acts as a negative regulator of ER-Golgi transport; possibly by inhibiting interaction between PDCD6 and SEC31. The sequence is that of Peflin from Mus musculus (Mouse).